The sequence spans 212 residues: ER lumen protein-retaining receptor 2 (212 aa).

At 1–4 (MNIF) the chain is on the lumenal side. Residues 5–24 (RLTGDLSHLAAIIILLLKIW) traverse the membrane as a helical segment. The Cytoplasmic segment spans residues 25–32 (KSRSCAGI). The helical transmembrane segment at 33–52 (SGKSQILFALVFTTRYLDLL) threads the bilayer. The interval 47–48 (RY) is interaction with the K-D-E-L motif on target proteins. Over 53–58 (TSFISL) the chain is Lumenal. The chain crosses the membrane as a helical span at residues 59 to 79 (YNTCMKVIYIGCAYATVYLIY). At 80–92 (AKFRATYDGNHDT) the chain is on the cytoplasmic side. The chain crosses the membrane as a helical span at residues 93-110 (FRAEFLVVPVGGLAFLVN). The Lumenal portion of the chain corresponds to 111 to 116 (HDFSPL). A helical transmembrane segment spans residues 117–135 (EILWTFSIYLESVAILPQL). The Cytoplasmic segment spans residues 136-149 (FMISKTGEAETITT). A helical transmembrane segment spans residues 150–168 (HYLFCLGVYRALYLFNWIW). Residues 159 to 169 (RALYLFNWIWR) are interaction with the K-D-E-L motif on target proteins. Residues 169-178 (RFYFEGFFDM) are Lumenal-facing. Residues 179–199 (IAIVAGVVQTILYCDFFYLYV) form a helical membrane-spanning segment. At 200–212 (TKVLKGKKLSLPA) the chain is on the cytoplasmic side. The segment at 204-207 (KGKK) is important for recycling of cargo proteins with the sequence motif K-D-E-L from the Golgi to the endoplasmic reticulum.

Belongs to the ERD2 family.

Its subcellular location is the endoplasmic reticulum membrane. The protein localises to the golgi apparatus membrane. The protein resides in the cytoplasmic vesicle. It localises to the COPI-coated vesicle membrane. Functionally, receptor for the C-terminal sequence motif K-D-E-L that is present on endoplasmic reticulum resident proteins and that mediates their recycling from the Golgi back to the endoplasmic reticulum. Binding is pH dependent, and is optimal at pH 5-5.4. This Danio rerio (Zebrafish) protein is ER lumen protein-retaining receptor 2 (kdelr2).